Here is a 318-residue protein sequence, read N- to C-terminus: Probable cell division protein WhiA (318 aa).

A DNA-binding region (H-T-H motif) is located at residues 281–314; sequence SLKELGEMLSPPVGKSGVNHRLRRIEKIAEELSK.

Belongs to the WhiA family.

In terms of biological role, involved in cell division and chromosome segregation. This chain is Probable cell division protein WhiA, found in Clostridium tetani (strain Massachusetts / E88).